Consider the following 404-residue polypeptide: Protein translocase subunit SecF (404 aa).

6 helical membrane-spanning segments follow: residues lysine 15 to alanine 35, leucine 225 to leucine 245, isoleucine 246 to phenylalanine 266, leucine 275 to valine 295, isoleucine 327 to valine 347, and leucine 355 to valine 375.

Belongs to the SecD/SecF family. SecF subfamily. Forms a complex with SecD. Part of the essential Sec protein translocation apparatus which comprises SecA, SecYEG and auxiliary proteins SecDF. Other proteins may also be involved.

The protein resides in the cell inner membrane. In terms of biological role, part of the Sec protein translocase complex. Interacts with the SecYEG preprotein conducting channel. SecDF uses the proton motive force (PMF) to complete protein translocation after the ATP-dependent function of SecA. In Koribacter versatilis (strain Ellin345), this protein is Protein translocase subunit SecF.